Consider the following 300-residue polypeptide: NAD kinase (300 aa).

Asp-75 (proton acceptor) is an active-site residue. Residues 75 to 76 (DG), 149 to 150 (ND), Arg-177, Asp-179, 190 to 195 (TAYALS), Ala-214, and Gln-248 contribute to the NAD(+) site.

Belongs to the NAD kinase family. The cofactor is a divalent metal cation.

It is found in the cytoplasm. It carries out the reaction NAD(+) + ATP = ADP + NADP(+) + H(+). Involved in the regulation of the intracellular balance of NAD and NADP, and is a key enzyme in the biosynthesis of NADP. Catalyzes specifically the phosphorylation on 2'-hydroxyl of the adenosine moiety of NAD to yield NADP. The chain is NAD kinase from Paraburkholderia phymatum (strain DSM 17167 / CIP 108236 / LMG 21445 / STM815) (Burkholderia phymatum).